Consider the following 455-residue polypeptide: MNTLIYISALGILSLLAEIFNARKAIVPITIIGLLAIFGFNISEYNHLGSYYNNMMVVDKFSVAFSSLFIIITVFLVALSHEFYKEQKTKISDYVGIKVFLLSGAVAMVSFGNLSMFFLGIEVLSISLYILAASNRLNLKSNEAGMKYFLMGSFASGIILFGICLIYGATGSFDLNKILILINTQAYPQWYYIGIVFLLIGMLFKIATVPFHFWAPDVYEGSPALTTATMSTLAKIVAMATLYKLVTVLLPIQLYSIQIIIVCVAIASMLLGNIMALRQNNVKRMFAFSGISHAGFMVSTLLLTSNAASTLLYYASAYAIAGIAFFAVVMYVTKDKENETINSFNGLGKTHPLLAGILTAALLSMAGIPVLSGFFAKFFLLNQLVYTDWLIVVFVAIISSIISVGYYFKIIIAMYTKESEQTLPNVPVMYQIVAVVALILNIALGLFPNVVLKLL.

The next 11 membrane-spanning stretches (helical) occupy residues 25–45 (AIVP…ISEY), 61–81 (FSVA…ALSH), 99–119 (VFLL…MFFL), 149–169 (FLMG…IYGA), 193–213 (IGIV…PFHF), 257–277 (IQII…IMAL), 285–305 (MFAF…LLTS), 312–332 (LYYA…VMYV), 355–375 (AGIL…SGFF), 391–411 (IVVF…FKII), and 432–452 (IVAV…NVVL).

It belongs to the complex I subunit 2 family. NDH-1 is composed of 14 different subunits. Subunits NuoA, H, J, K, L, M, N constitute the membrane sector of the complex.

It is found in the cell inner membrane. The enzyme catalyses a quinone + NADH + 5 H(+)(in) = a quinol + NAD(+) + 4 H(+)(out). Functionally, NDH-1 shuttles electrons from NADH, via FMN and iron-sulfur (Fe-S) centers, to quinones in the respiratory chain. The immediate electron acceptor for the enzyme in this species is believed to be a menaquinone. Couples the redox reaction to proton translocation (for every two electrons transferred, four hydrogen ions are translocated across the cytoplasmic membrane), and thus conserves the redox energy in a proton gradient. The chain is NADH-quinone oxidoreductase subunit N from Flavobacterium psychrophilum (strain ATCC 49511 / DSM 21280 / CIP 103535 / JIP02/86).